A 37-amino-acid polypeptide reads, in one-letter code: Natriuretic peptide PNP (37 aa).

Residues C14 and C30 are joined by a disulfide bond.

As to expression, expressed by the venom gland.

The protein resides in the secreted. Its function is as follows. Increases urine flow and decreases blood pressure when administered to rats by intravenous injection. Inhibits thrombin-induced platelet aggregation. Stimulates cGMP production via the natriuretic peptide receptor-A (NPR1). The protein is Natriuretic peptide PNP of Pseudocerastes persicus (Persian horned viper).